A 249-amino-acid polypeptide reads, in one-letter code: Probable phosphoglycerate mutase (249 aa).

Residues 9–16 (RHGESTWN), 22–23 (TG), Arg61, 88–91 (ERMY), Lys99, 115–116 (RR), and 184–185 (GN) each bind substrate. His10 acts as the Tele-phosphohistidine intermediate in catalysis. The Proton donor/acceptor role is filled by Glu88.

The protein belongs to the phosphoglycerate mutase family. BPG-dependent PGAM subfamily. As to quaternary structure, homodimer.

The catalysed reaction is (2R)-2-phosphoglycerate = (2R)-3-phosphoglycerate. It catalyses the reaction (2R)-3-phospho-glyceroyl phosphate = (2R)-2,3-bisphosphoglycerate + H(+). In terms of biological role, catalyzes the interconversion of 2-phosphoglycerate and 3-phosphoglycerate. This chain is Probable phosphoglycerate mutase (gpmA), found in Dictyostelium discoideum (Social amoeba).